The sequence spans 197 residues: Small ribosomal subunit protein uS10c (197 aa).

Residues 1–60 (MATSSLSTIVFSPLALSNSSSFPNKPQVSNLSLHSSLSNLRRTLSHSSPSSSSSSNVRVF) constitute a chloroplast transit peptide. The disordered stretch occupies residues 67-91 (ESQETGPESYVEEGSETSALGIGAD).

It belongs to the universal ribosomal protein uS10 family. As to quaternary structure, part of the 30S ribosomal subunit.

It localises to the plastid. The protein resides in the chloroplast. The protein is Small ribosomal subunit protein uS10c (RPS10) of Mesembryanthemum crystallinum (Common ice plant).